Reading from the N-terminus, the 277-residue chain is NADPH-dependent 7-cyano-7-deazaguanine reductase (277 aa).

83-85 (IES) serves as a coordination point for substrate. 85 to 86 (SK) is a binding site for NADPH. The active-site Thioimide intermediate is cysteine 184. The Proton donor role is filled by aspartate 191. Substrate is bound at residue 223–224 (HE). Residue 252–253 (RG) coordinates NADPH.

It belongs to the GTP cyclohydrolase I family. QueF type 2 subfamily. In terms of assembly, homodimer.

It is found in the cytoplasm. The enzyme catalyses 7-aminomethyl-7-carbaguanine + 2 NADP(+) = 7-cyano-7-deazaguanine + 2 NADPH + 3 H(+). It functions in the pathway tRNA modification; tRNA-queuosine biosynthesis. In terms of biological role, catalyzes the NADPH-dependent reduction of 7-cyano-7-deazaguanine (preQ0) to 7-aminomethyl-7-deazaguanine (preQ1). The protein is NADPH-dependent 7-cyano-7-deazaguanine reductase of Cupriavidus pinatubonensis (strain JMP 134 / LMG 1197) (Cupriavidus necator (strain JMP 134)).